Consider the following 156-residue polypeptide: Ribosomal RNA large subunit methyltransferase H (156 aa).

S-adenosyl-L-methionine-binding positions include L73, G104, and 123-128 (LSPLTL).

It belongs to the RNA methyltransferase RlmH family. In terms of assembly, homodimer.

It is found in the cytoplasm. It catalyses the reaction pseudouridine(1915) in 23S rRNA + S-adenosyl-L-methionine = N(3)-methylpseudouridine(1915) in 23S rRNA + S-adenosyl-L-homocysteine + H(+). In terms of biological role, specifically methylates the pseudouridine at position 1915 (m3Psi1915) in 23S rRNA. The sequence is that of Ribosomal RNA large subunit methyltransferase H from Aliivibrio salmonicida (strain LFI1238) (Vibrio salmonicida (strain LFI1238)).